Reading from the N-terminus, the 571-residue chain is Calcium-dependent protein kinase 16 (571 aa).

The disordered stretch occupies residues 1–74 (MGLCFSSAAK…TRHTPPHGKV (74 aa)). G2 is lipidated: N-myristoyl glycine. C4 carries S-palmitoyl cysteine lipidation. Residues 63-72 (TPTRHTPPHG) show a composition bias toward basic residues. Residues 108-368 (YTIGKLLGHG…AAQALSHPWV (261 aa)) form the Protein kinase domain. ATP is bound by residues 114–122 (LGHGQFGYT) and K137. D234 serves as the catalytic Proton acceptor. S274 carries the post-translational modification Phosphoserine. Residues 374 to 404 (ASEIPIDISVLNNMRQFVKFSRLKQFALRAL) form an autoinhibitory domain region. 4 consecutive EF-hand domains span residues 411 to 446 (EELA…DHPW), 448 to 483 (LKDA…VNQL), 490 to 525 (KWQQ…KGSI), and 528 to 555 (LLEE…ASIK). D424, D426, N428, E435, D461, N463, D465, E472, D503, D505, D507, E514, D533, D535, D537, and K539 together coordinate Ca(2+). Phosphoserine is present on S541. E544 is a Ca(2+) binding site.

Belongs to the protein kinase superfamily. Ser/Thr protein kinase family. CDPK subfamily.

It is found in the cell membrane. The protein resides in the nucleus. The catalysed reaction is L-seryl-[protein] + ATP = O-phospho-L-seryl-[protein] + ADP + H(+). It catalyses the reaction L-threonyl-[protein] + ATP = O-phospho-L-threonyl-[protein] + ADP + H(+). Its activity is regulated as follows. Activated by calcium. Autophosphorylation may play an important role in the regulation of the kinase activity. In terms of biological role, may play a role in signal transduction pathways that involve calcium as a second messenger. This chain is Calcium-dependent protein kinase 16 (CPK16), found in Arabidopsis thaliana (Mouse-ear cress).